The primary structure comprises 64 residues: Small ribosomal subunit protein eS17 (64 aa).

The protein belongs to the eukaryotic ribosomal protein eS17 family.

The sequence is that of Small ribosomal subunit protein eS17 from Methanosarcina acetivorans (strain ATCC 35395 / DSM 2834 / JCM 12185 / C2A).